The chain runs to 104 residues: Complex III assembly factor LYRM7 (104 aa).

The protein belongs to the complex I LYR family. In terms of assembly, interacts with UQCRFS1.

It localises to the mitochondrion matrix. Its function is as follows. Assembly factor required for Rieske Fe-S protein UQCRFS1 incorporation into the cytochrome b-c1 (CIII) complex. Functions as a chaperone, binding to this subunit within the mitochondrial matrix and stabilizing it prior to its translocation and insertion into the late CIII dimeric intermediate within the mitochondrial inner membrane. This chain is Complex III assembly factor LYRM7 (LYRM7), found in Danio rerio (Zebrafish).